Here is a 284-residue protein sequence, read N- to C-terminus: Pantothenate synthetase (284 aa).

30 to 37 (MGYLHEGH) is an ATP binding site. Catalysis depends on His-37, which acts as the Proton donor. Gln-61 is a (R)-pantoate binding site. Position 61 (Gln-61) interacts with beta-alanine. 147-150 (GQKD) contributes to the ATP binding site. Position 153 (Gln-153) interacts with (R)-pantoate. Residues Val-176 and 184 to 187 (KSSR) each bind ATP.

It belongs to the pantothenate synthetase family. Homodimer.

It localises to the cytoplasm. It catalyses the reaction (R)-pantoate + beta-alanine + ATP = (R)-pantothenate + AMP + diphosphate + H(+). It participates in cofactor biosynthesis; (R)-pantothenate biosynthesis; (R)-pantothenate from (R)-pantoate and beta-alanine: step 1/1. In terms of biological role, catalyzes the condensation of pantoate with beta-alanine in an ATP-dependent reaction via a pantoyl-adenylate intermediate. The chain is Pantothenate synthetase from Lysinibacillus sphaericus (strain C3-41).